Reading from the N-terminus, the 667-residue chain is UvrABC system protein B (667 aa).

The Helicase ATP-binding domain maps to 31–414 (AGIESGEKEQ…EMDRTKHVVQ (384 aa)). 44 to 51 (GATGTGKT) contacts ATP. A Beta-hairpin motif is present at residues 97 to 120 (YYDYYQPEAYVPSSDTYIEKDSAI). One can recognise a Helicase C-terminal domain in the interval 435-597 (QIDDLVGEIN…ITPHTIKKAI (163 aa)). The UVR domain occupies 630–665 (LDMISKLEEQMKTAAKKLDFEQAATLRDTVMELKAQ).

The protein belongs to the UvrB family. As to quaternary structure, forms a heterotetramer with UvrA during the search for lesions. Interacts with UvrC in an incision complex.

It localises to the cytoplasm. In terms of biological role, the UvrABC repair system catalyzes the recognition and processing of DNA lesions. A damage recognition complex composed of 2 UvrA and 2 UvrB subunits scans DNA for abnormalities. Upon binding of the UvrA(2)B(2) complex to a putative damaged site, the DNA wraps around one UvrB monomer. DNA wrap is dependent on ATP binding by UvrB and probably causes local melting of the DNA helix, facilitating insertion of UvrB beta-hairpin between the DNA strands. Then UvrB probes one DNA strand for the presence of a lesion. If a lesion is found the UvrA subunits dissociate and the UvrB-DNA preincision complex is formed. This complex is subsequently bound by UvrC and the second UvrB is released. If no lesion is found, the DNA wraps around the other UvrB subunit that will check the other stand for damage. This is UvrABC system protein B from Lactiplantibacillus plantarum (strain ATCC BAA-793 / NCIMB 8826 / WCFS1) (Lactobacillus plantarum).